The sequence spans 405 residues: Beta-citrylglutamate synthase B (405 aa).

The ATP-grasp domain occupies F115–L300. ATP contacts are provided by residues K154, Q189–D199, and R215. Residues D260, E273, and N275 each contribute to the Mg(2+) site. Residues D260, E273, and N275 each coordinate Mn(2+). The interval A359–N387 is disordered. The segment covering M360–E371 has biased composition (low complexity).

It belongs to the RimK family. Requires Mg(2+) as cofactor. It depends on Mn(2+) as a cofactor.

It is found in the cytoplasm. It catalyses the reaction citrate + L-glutamate + ATP = beta-citrylglutamate + ADP + phosphate + H(+). It carries out the reaction N-acetyl-L-aspartate + L-glutamate + ATP = N-acetyl-L-aspartyl-L-glutamate + ADP + phosphate + H(+). Its function is as follows. Catalyzes the synthesis of beta-citryl-L-glutamate and N-acetyl-L-aspartyl-L-glutamate. Beta-citryl-L-glutamate is synthesized more efficiently than N-acetyl-L-aspartyl-L-glutamate. The polypeptide is Beta-citrylglutamate synthase B (rimklb) (Danio rerio (Zebrafish)).